The following is a 539-amino-acid chain: T-complex protein 1 subunit zeta (539 aa).

The protein belongs to the TCP-1 chaperonin family. In terms of assembly, heterooligomeric complex of about 850 to 900 kDa that forms two stacked rings, 12 to 16 nm in diameter.

The protein resides in the cytoplasm. Functionally, molecular chaperone; assists the folding of proteins upon ATP hydrolysis. Known to play a role, in vitro, in the folding of actin and tubulin. The protein is T-complex protein 1 subunit zeta (cct-6) of Caenorhabditis elegans.